The sequence spans 295 residues: GTPase Era (295 aa).

The Era-type G domain occupies 7–176 (KTISVCIIGR…IKSKAKVSPW (170 aa)). A G1 region spans residues 15-22 (GRPNSGKS). 15-22 (GRPNSGKS) is a binding site for GTP. Positions 41-45 (QTTRS) are G2. The interval 62 to 65 (DTPG) is G3. GTP-binding positions include 62-66 (DTPGI) and 124-127 (NKID). Residues 124-127 (NKID) form a G4 region. Residues 152 to 154 (ISA) are G5. A KH type-2 domain is found at 204–281 (LQQELPYKLT…HLFLFVKVHA (78 aa)).

It belongs to the TRAFAC class TrmE-Era-EngA-EngB-Septin-like GTPase superfamily. Era GTPase family. As to quaternary structure, monomer.

Its subcellular location is the cytoplasm. The protein resides in the cell inner membrane. An essential GTPase that binds both GDP and GTP, with rapid nucleotide exchange. Plays a role in 16S rRNA processing and 30S ribosomal subunit biogenesis and possibly also in cell cycle regulation and energy metabolism. The sequence is that of GTPase Era from Rickettsia typhi (strain ATCC VR-144 / Wilmington).